We begin with the raw amino-acid sequence, 575 residues long: Carboxylesterase 5A (575 aa).

An N-terminal signal peptide occupies residues 1–28 (MSGDWVRPGQALIWVIWIFGAIIEGSVT). The cysteines at positions 94 and 121 are disulfide-linked. Asparagine 134 is a glycosylation site (N-linked (GlcNAc...) asparagine). Serine 226 acts as the Acyl-ester intermediate in catalysis. A disulfide bond links cysteine 280 and cysteine 291. A glycan (N-linked (GlcNAc...) asparagine) is linked at asparagine 281. Glutamate 345 serves as the catalytic Charge relay system. Residue asparagine 363 is glycosylated (N-linked (GlcNAc...) asparagine). Histidine 454 (charge relay system) is an active-site residue. Asparagine 524 carries an N-linked (GlcNAc...) asparagine glycan.

Belongs to the type-B carboxylesterase/lipase family. Post-translationally, N-glycosylated.

It localises to the secreted. The enzyme catalyses a carboxylic ester + H2O = an alcohol + a carboxylate + H(+). In terms of biological role, involved in the detoxification of xenobiotics and in the activation of ester and amide prodrugs. The protein is Carboxylesterase 5A (Ces5a) of Mus musculus (Mouse).